The chain runs to 201 residues: MSAARLSAVAQSTVYAFSARPLAGGEPVSLGSLRGKVLLIENVASLUGTTTRDYTEMNDLQKRLGPRGLVVLGFPCNQFGHQENGKNEEILNSLKYVRPGGGFEPNFTLFEKCEVNGEKAHPLFTFLRNALPAPSDDPTALMTDPKYIIWSPVCRNDISWNFEKFLVGPDGVPVRRYSRRFRTIDIEPDIEALLSKQPSNP.

Position 32 is a phosphoserine (S32). The active site involves U47. U47 is a non-standard amino acid (selenocysteine). Residues K86 and K112 each carry the N6-acetyllysine; alternate modification. N6-succinyllysine; alternate is present on residues K86 and K112. K119 carries the post-translational modification N6-acetyllysine. Position 146 is an N6-acetyllysine; alternate (K146). An N6-succinyllysine; alternate modification is found at K146. S195 and S199 each carry phosphoserine.

This sequence belongs to the glutathione peroxidase family. Homotetramer. Interacts with MIEN1. During periods of oxidative stress, Sec-47 may react with a superoxide radical, irreversibly lose hydroselenide and be converted to dehydroalanine. Expressed in liver and lung.

It is found in the cytoplasm. It localises to the mitochondrion. The enzyme catalyses 2 glutathione + H2O2 = glutathione disulfide + 2 H2O. It catalyses the reaction a hydroperoxy polyunsaturated fatty acid + 2 glutathione = a hydroxy polyunsaturated fatty acid + glutathione disulfide + H2O. It carries out the reaction tert-butyl hydroperoxide + 2 glutathione = tert-butanol + glutathione disulfide + H2O. The catalysed reaction is cumene hydroperoxide + 2 glutathione = 2-phenylpropan-2-ol + glutathione disulfide + H2O. The enzyme catalyses (13S)-hydroperoxy-(9Z,11E)-octadecadienoate + 2 glutathione = (13S)-hydroxy-(9Z,11E)-octadecadienoate + glutathione disulfide + H2O. It catalyses the reaction (9S)-hydroperoxy-(10E,12Z)-octadecadienoate + 2 glutathione = (9S)-hydroxy-(10E,12Z)-octadecadienoate + glutathione disulfide + H2O. It carries out the reaction (5S)-hydroperoxy-(6E,8Z,11Z,14Z)-eicosatetraenoate + 2 glutathione = (5S)-hydroxy-(6E,8Z,11Z,14Z)-eicosatetraenoate + glutathione disulfide + H2O. The catalysed reaction is (12S)-hydroperoxy-(5Z,8Z,10E,14Z)-eicosatetraenoate + 2 glutathione = (12S)-hydroxy-(5Z,8Z,10E,14Z)-eicosatetraenoate + glutathione disulfide + H2O. The enzyme catalyses (12R)-hydroperoxy-(5Z,8Z,10E,14Z)-eicosatetraenoate + 2 glutathione = (12R)-hydroxy-(5Z,8Z,10E,14Z)-eicosatetraenoate + glutathione disulfide + H2O. It catalyses the reaction (15S)-hydroperoxy-(5Z,8Z,11Z,13E)-eicosatetraenoate + 2 glutathione = (15S)-hydroxy-(5Z,8Z,11Z,13E)-eicosatetraenoate + glutathione disulfide + H2O. It carries out the reaction (5S)-hydroperoxy-(6E,8Z,11Z,14Z,17Z)-eicosapentaenoate + 2 glutathione = (5S)-hydroxy-(6E,8Z,11Z,14Z,17Z)-eicosapentaenoate + glutathione disulfide + H2O. The catalysed reaction is (12S)-hydroperoxy-(5Z,8Z,10E,14Z,17Z)-eicosapentaenoate + 2 glutathione = (12S)-hydroxy-(5Z,8Z,10E,14Z,17Z)-eicosapentaenoate + glutathione disulfide + H2O. The enzyme catalyses (15S)-hydroperoxy-(5Z,8Z,11Z,13E,17Z)-eicosapentaenoate + 2 glutathione = (15S)-hydroxy-(5Z,8Z,11Z,13E,17Z)-eicosapentaenoate + glutathione disulfide + H2O. It catalyses the reaction (15S)-hydroperoxy-(11Z,13E)-eicosadienoate + 2 glutathione = (15S)-hydroxy-(11Z,13E)-eicosadienoate + glutathione disulfide + H2O. It carries out the reaction (17S)-hydroperoxy-(4Z,7Z,10Z,13Z,15E,19Z)-docosahexaenoate + 2 glutathione = (17S)-hydroxy-(4Z,7Z,10Z,13Z,15E,19Z)-docosahexaenoate + glutathione disulfide + H2O. In terms of biological role, catalyzes the reduction of hydroperoxides in a glutathione-dependent manner thus regulating cellular redox homeostasis. Can reduce small soluble hydroperoxides such as H2O2, cumene hydroperoxide and tert-butyl hydroperoxide, as well as several fatty acid-derived hydroperoxides. In platelets catalyzes the reduction of 12-hydroperoxyeicosatetraenoic acid, the primary product of the arachidonate 12-lipoxygenase pathway. This is Glutathione peroxidase 1 from Rattus norvegicus (Rat).